Consider the following 372-residue polypeptide: MATSPQKSPSVPKSPTPKSPPSRKKDDSFLGKLGGTLARRKKAKEVSELQEEGMNAINLPLSPIPFELDPEDTMLEENEVRTMVDPNSRSDPKLQELMKVLIDWINDVLVGERIIVKDLAEDLYDGQVLQKLFEKLESEKLNVAEVTQSEIAQKQKLQTVLEKINETLKLPPRSIKWNVDSVHAKSLVAILHLLVALSQYFRAPIRLPDHVSIQVVVVQKREGILQSRQIQEEITGNTEALSGRHERDAFDTLFDHAPDKLNVVKKTLITFVNKHLNKLNLEVTELETQFADGVYLVLLMGLLEGYFVPLHSFFLTPDSFEQKVLNVSFAFELMQDGGLEKPKPRPEDIVNCDLKSTLRVLYNLFTKYRNVE.

Low complexity predominate over residues 1–11; that stretch reads MATSPQKSPSV. The interval 1–45 is disordered; it reads MATSPQKSPSVPKSPTPKSPPSRKKDDSFLGKLGGTLARRKKAKE. Ala-2 bears the N-acetylalanine mark. Ser-8, Ser-14, and Ser-19 each carry phosphoserine. Residues 21-25 form an interaction with ARHGAP31 region; that stretch reads PSRKK. Phosphoserine occurs at positions 28 and 62. Calponin-homology (CH) domains follow at residues 95 to 202 and 262 to 369; these read QELM…QYFR and NVVK…TKYR. A required for interaction with TESK1 and ILK region spans residues 223–372; the sequence is GILQSRQIQE…NLFTKYRNVE (150 aa).

It belongs to the parvin family. As to quaternary structure, component of the heterotrimeric IPP (ILK-PINCH-PARVIN) complex composed of ILK, LIMS1/PINCH and PARVA; the complex binds to F-actin via the C-terminal tail of LIMS1 and the N-terminal region of PARVA, promoting F-actin filament bundling. Formation of the IPP complex is dependent on protein kinase C and precedes integrin-mediated cell adhesion and spreading. Interacts with TGFB1I1. Interacts with ARHGAP31. Interacts with the actin cytoskeleton. Interacts (via C-terminus) with TESK1 (via C-terminus); the interaction inhibits TESK1 kinase activity. Interacts with PXN/PAXILLIN (via LD motif 4). As to expression, widely expressed, with highest levels in heart, skeletal muscle, kidney and liver.

Its subcellular location is the cell junction. It localises to the focal adhesion. It is found in the cell membrane. The protein resides in the cytoplasm. The protein localises to the cytoskeleton. Its subcellular location is the myofibril. It localises to the sarcomere. It is found in the z line. In terms of biological role, plays a role in sarcomere organization and in smooth muscle cell contraction. Required for normal development of the embryonic cardiovascular system, and for normal septation of the heart outflow tract. Plays a role in sprouting angiogenesis and is required for normal adhesion of vascular smooth muscle cells to endothelial cells during blood vessel development. Plays a role in the reorganization of the actin cytoskeleton, formation of lamellipodia and ciliogenesis. Plays a role in the establishment of cell polarity, cell adhesion, cell spreading, and directed cell migration. Within the IPP (ILK-PINCH-PARVIN) complex, binds to F-actin, promoting F-actin bundling, a process required to generate force for actin cytoskeleton reorganization and subsequent dynamic cell adhesion events such as cell spreading and migration. This Homo sapiens (Human) protein is Alpha-parvin (PARVA).